The sequence spans 578 residues: Putative multidrug export ATP-binding/permease protein SA1683 (578 aa).

Topologically, residues 1–15 are cytoplasmic; the sequence is MIKRYLQFVKPYKYR. The chain crosses the membrane as a helical span at residues 16 to 36; sequence IFATIIVGIIKFGIPMLIPLL. Residues 16 to 306 enclose the ABC transmembrane type-1 domain; the sequence is IFATIIVGII…LVASFTTLTQ (291 aa). At 37–59 the chain is on the extracellular side; that stretch reads IKYAIDGVINNHALTTDEKVHHL. The chain crosses the membrane as a helical span at residues 60–80; that stretch reads TIAIGIALFIFVIVRPPIEFI. Residues 81-138 lie on the Cytoplasmic side of the membrane; that stretch reads RQYLAQWTSNKILYDIRKKLYNHLQALSARFYANNQVGQVISRVINDVEQTKDFILTG. The helical transmembrane segment at 139–159 threads the bilayer; the sequence is LMNIWLDCITIIIALSIMFFL. The Extracellular segment spans residues 160 to 162; that stretch reads DVK. The chain crosses the membrane as a helical span at residues 163-183; sequence LTLAALFIFPFYILTVYVFFG. At 184–244 the chain is on the cytoplasmic side; sequence RLRKLTRERS…TRALKHTRWN (61 aa). A helical membrane pass occupies residues 245–263; that stretch reads AYSFAAINTVTDIGPIIVI. Residues 264–269 are Extracellular-facing; it reads GVGAYL. Residues 270-287 form a helical membrane-spanning segment; the sequence is AISGSITVGTLAAFVGYL. Topologically, residues 288 to 578 are cytoplasmic; it reads ELLFGPLRRL…YEHLYSIQNL (291 aa). Residues 340 to 575 form the ABC transporter domain; that stretch reads IDIDHVSFQY…QGAYEHLYSI (236 aa). Position 374–381 (374–381) interacts with ATP; that stretch reads GMSGGGKS.

The protein belongs to the ABC transporter superfamily. In terms of assembly, homodimer.

The protein resides in the cell membrane. Its function is as follows. May be involved in multidrug export. Transmembrane domains (TMD) form a pore in the cell membrane and the ATP-binding domain (NBD) is responsible for energy generation. The sequence is that of Putative multidrug export ATP-binding/permease protein SA1683 from Staphylococcus aureus (strain N315).